The chain runs to 403 residues: Tyrosine--tRNA ligase (403 aa).

Positions 46-55 match the 'HIGH' region motif; that stretch reads PTAPDLHLGH. Positions 230–234 match the 'KMSKS' region motif; it reads KMSKS. K233 is a binding site for ATP. Residues 342–402 enclose the S4 RNA-binding domain; sequence LFITQILNQA…GKKAYAKVTV (61 aa).

This sequence belongs to the class-I aminoacyl-tRNA synthetase family. TyrS type 2 subfamily. In terms of assembly, homodimer.

The protein localises to the cytoplasm. It catalyses the reaction tRNA(Tyr) + L-tyrosine + ATP = L-tyrosyl-tRNA(Tyr) + AMP + diphosphate + H(+). Its function is as follows. Catalyzes the attachment of tyrosine to tRNA(Tyr) in a two-step reaction: tyrosine is first activated by ATP to form Tyr-AMP and then transferred to the acceptor end of tRNA(Tyr). The protein is Tyrosine--tRNA ligase of Psychrobacter arcticus (strain DSM 17307 / VKM B-2377 / 273-4).